A 173-amino-acid chain; its full sequence is Ribosome maturation factor RimM (173 aa).

Residues 98-170 (EGEFYWCDLI…IMTVSPTEGL (73 aa)) form the PRC barrel domain.

Belongs to the RimM family. Binds ribosomal protein uS19.

The protein resides in the cytoplasm. Functionally, an accessory protein needed during the final step in the assembly of 30S ribosomal subunit, possibly for assembly of the head region. Essential for efficient processing of 16S rRNA. May be needed both before and after RbfA during the maturation of 16S rRNA. It has affinity for free ribosomal 30S subunits but not for 70S ribosomes. The sequence is that of Ribosome maturation factor RimM from Geobacter metallireducens (strain ATCC 53774 / DSM 7210 / GS-15).